Reading from the N-terminus, the 512-residue chain is Reduced folate transporter (512 aa).

Met1 bears the N-acetylmethionine mark. The Cytoplasmic segment spans residues 1–29 (MVPTGQVAEKQAYEEPRQDHELKSWRCLV). Residues 30-50 (FYLCFFGFMAQLRPGESFITP) form a helical membrane-spanning segment. 2 residues coordinate folate: Ile48 and Thr49. Over 51–62 (FLLERKFTKEQV) the chain is Extracellular. Residues 63–85 (TNEIIPMLPYSHLAVLVPVFLLT) traverse the membrane as a helical segment. Residues 86-89 (DYLR) are Cytoplasmic-facing. A helical membrane pass occupies residues 90–110 (YKPVLVLQCLSFVCVWLLLLL). Residues 111 to 114 (GTSV) lie on the Extracellular side of the membrane. A helical membrane pass occupies residues 115–137 (VHMQLMEVFYSVTMAARIAYSSY). Glu121 and Arg131 together coordinate folate. The Cytoplasmic portion of the chain corresponds to 138–151 (IFSLVHPSRYQRMA). A helical membrane pass occupies residues 152-176 (SYSRAAVLLGVFISSVLGQALVTVG). Val162 contributes to the folate binding site. Over 177 to 181 (HISTY) the chain is Extracellular. The helical transmembrane segment at 182–200 (TLNCVSLGFILFSLVLSLF) threads the bilayer. Over 201 to 266 (LKRPKRSLFF…ELVENARQPQ (66 aa)) the chain is Cytoplasmic. Residues 267–292 (LRLWCLWWVFNSSGYYLITYYVHVLW) form a helical membrane-spanning segment. Folate is bound by residues Tyr281, Tyr282, and Tyr286. The Extracellular portion of the chain corresponds to 293–300 (RSTDSSLS). Residues 301–323 (YNGAVDAASTLLSAITSFSAGFL) form a helical membrane-spanning segment. The Cytoplasmic portion of the chain corresponds to 324–329 (SIRWTL). A helical membrane pass occupies residues 330 to 350 (WSKLVIAGVIAIQASLVFCMF). Over 351–353 (QIR) the chain is Extracellular. The chain crosses the membrane as a helical span at residues 354-377 (DIWVCYVTFVLFRGAYQFLVPIAT). The folate site is built by Arg366 and Gln370. At 378–391 (FQIASSLSKELCAL) the chain is on the cytoplasmic side. The chain crosses the membrane as a helical span at residues 392 to 415 (VFGINTFLATALKTCITLVVSDKR). Residues 400 to 412 (ATALKTCITLVVS) are required for substrate-binding. Residues 416–423 (GLGLQVRD) lie on the Extracellular side of the membrane. The chain crosses the membrane as a helical span at residues 424–448 (QFRIYFIYFLMLSITCFAWAGLDGL). The Cytoplasmic segment spans residues 449–512 (RYCQRGRHQP…RGDLRVEAKA (64 aa)). A phosphoserine mark is found at Ser467, Ser472, and Ser477. A disordered region spans residues 478-512 (LQDGDLRGPQPSAPQLLSEDGMEDDRGDLRVEAKA).

It belongs to the reduced folate carrier (RFC) transporter (TC 2.A.48) family.

Its subcellular location is the cell membrane. It is found in the apical cell membrane. The protein resides in the basolateral cell membrane. The enzyme catalyses 5-amino-1-(5-phospho-beta-D-ribosyl)imidazole-4-carboxamide(in) + (6S)-5-methyl-5,6,7,8-tetrahydrofolate(out) = 5-amino-1-(5-phospho-beta-D-ribosyl)imidazole-4-carboxamide(out) + (6S)-5-methyl-5,6,7,8-tetrahydrofolate(in). In terms of biological role, antiporter that mediates the import of reduced folates, driven by the export of organic anions. Also acts as an importer of immunoreactive cyclic dinucleotides, but with a lower transporter activity. Mechanistically, acts as a secondary active transporter, which exports intracellular organic anions down their concentration gradients to facilitate the uptake of its substrates. Has high affinity for N5-methyltetrahydrofolate, the predominant circulating form of folate. Also mediates the import of antifolate drug methotrexate. 5-amino-4-imidazolecarboxamide riboside (AICAR), when phosphorylated to AICAR monophosphate, can serve as an organic anion for antiporter activity. The protein is Reduced folate transporter of Mus musculus (Mouse).